The chain runs to 524 residues: Bifunctional purine biosynthesis protein PurH (524 aa).

In terms of domain architecture, MGS-like spans 1–145 (MIKQALLSVS…KNHRDVTVIV (145 aa)).

This sequence belongs to the PurH family.

It carries out the reaction (6R)-10-formyltetrahydrofolate + 5-amino-1-(5-phospho-beta-D-ribosyl)imidazole-4-carboxamide = 5-formamido-1-(5-phospho-D-ribosyl)imidazole-4-carboxamide + (6S)-5,6,7,8-tetrahydrofolate. The catalysed reaction is IMP + H2O = 5-formamido-1-(5-phospho-D-ribosyl)imidazole-4-carboxamide. The protein operates within purine metabolism; IMP biosynthesis via de novo pathway; 5-formamido-1-(5-phospho-D-ribosyl)imidazole-4-carboxamide from 5-amino-1-(5-phospho-D-ribosyl)imidazole-4-carboxamide (10-formyl THF route): step 1/1. Its pathway is purine metabolism; IMP biosynthesis via de novo pathway; IMP from 5-formamido-1-(5-phospho-D-ribosyl)imidazole-4-carboxamide: step 1/1. The polypeptide is Bifunctional purine biosynthesis protein PurH (Cupriavidus metallidurans (strain ATCC 43123 / DSM 2839 / NBRC 102507 / CH34) (Ralstonia metallidurans)).